A 42-amino-acid polypeptide reads, in one-letter code: Putative protein RNF216-like (42 aa).

This Homo sapiens (Human) protein is Putative protein RNF216-like (RNF216P1).